Here is a 313-residue protein sequence, read N- to C-terminus: Protein FixB (313 aa).

255 to 283 (LYLAVGISGQIQHMVGANASQTIFAINKD) provides a ligand contact to FAD.

This sequence belongs to the ETF alpha-subunit/FixB family. As to quaternary structure, heterodimer of FixA and FixB.

Its pathway is amine and polyamine metabolism; carnitine metabolism. Functionally, required for anaerobic carnitine reduction. May bring reductant to CaiA. This chain is Protein FixB, found in Escherichia coli O6:K15:H31 (strain 536 / UPEC).